The primary structure comprises 315 residues: Diacylglycerol kinase (315 aa).

The DAGKc domain maps to 1-132 (MRKRARIIYN…VDIGKMNNRY (132 aa)). Residues 10–14 (NPTSG), Thr41, 67–73 (GDGTLNE), and Thr94 contribute to the ATP site. Mg(2+) is bound by residues Lys213, Asp216, and Tyr218. The active-site Proton acceptor is the Glu273.

Belongs to the diacylglycerol/lipid kinase family. As to quaternary structure, homodimer. Mg(2+) serves as cofactor.

It carries out the reaction a 1,2-diacyl-sn-glycerol + ATP = a 1,2-diacyl-sn-glycero-3-phosphate + ADP + H(+). Functionally, catalyzes the phosphorylation of diacylglycerol (DAG) into phosphatidic acid. Is a key enzyme involved in the production of lipoteichoic acid by reintroducing DAG formed from the breakdown of membrane phospholipids into the phosphatidylglycerol biosynthetic pathway. This chain is Diacylglycerol kinase (dagK), found in Staphylococcus aureus (strain MRSA252).